The primary structure comprises 255 residues: 5-oxoprolinase subunit A (255 aa).

This sequence belongs to the LamB/PxpA family. As to quaternary structure, forms a complex composed of PxpA, PxpB and PxpC.

It catalyses the reaction 5-oxo-L-proline + ATP + 2 H2O = L-glutamate + ADP + phosphate + H(+). Its function is as follows. Catalyzes the cleavage of 5-oxoproline to form L-glutamate coupled to the hydrolysis of ATP to ADP and inorganic phosphate. The polypeptide is 5-oxoprolinase subunit A (Rhodopseudomonas palustris (strain BisA53)).